Consider the following 179-residue polypeptide: Lebocin-3 (179 aa).

A signal peptide spans 1–16 (MYKFLVFSSVLVLFFA). A propeptide spanning residues 17–120 (QASCQRFIQP…QPIESHRNTR (104 aa)) is cleaved from the precursor. T135 carries an O-linked (GalNAc...) threonine glycan. The propeptide occupies 153–179 (RRHASEDQEELRQYNEHFLIPRDIFQE).

This sequence belongs to the lebocin family. O-glycosylation is important for the antibacterial activity of lebocin. In terms of tissue distribution, hemolymph. Produced in fat body.

It localises to the secreted. Functionally, antibacterial peptide. This Bombyx mori (Silk moth) protein is Lebocin-3 (LEB3).